The primary structure comprises 477 residues: Delayed-rectifier potassium channel regulatory subunit KCNS2 (477 aa).

Residues 1–184 are Cytoplasmic-facing; that stretch reads MTRQSLWDLS…LALDNPGYSV (184 aa). The chain crosses the membrane as a helical span at residues 185–206; it reads LSRVFSVLSILVVLGSIITMCL. At 207–225 the chain is on the extracellular side; the sequence is NSLPDFQIPDSQGNPGEDP. A helical transmembrane segment spans residues 226 to 248; sequence RFEIVEHFGIAWFTFELVARFAV. The Cytoplasmic segment spans residues 249–259; sequence APDFLKFFKNA. Residues 260–280 form a helical membrane-spanning segment; it reads LNLIDLMSIVPFYITLVVNLV. Topologically, residues 281-290 are extracellular; the sequence is VESSPTLANL. A helical; Voltage-sensor transmembrane segment spans residues 291–311; sequence GRVAQVLRLMRIFRILKLARH. The Cytoplasmic segment spans residues 312 to 326; the sequence is STGLRSLGATLKYSY. A helical membrane pass occupies residues 327-348; the sequence is KEVGLLLLYLSVGISIFSVVAY. Topologically, residues 349–361 are extracellular; the sequence is TIEKEENEGLATI. Residues 362–373 constitute an intramembrane region (helical); sequence PACWWWATVSMT. The short motif at 374–379 is the Selectivity filter element; the sequence is TVGYGD. Residues 374–381 lie within the membrane without spanning it; that stretch reads TVGYGDVV. The Extracellular segment spans residues 382–388; the sequence is PGTTAGK. Residues 389–417 traverse the membrane as a helical segment; that stretch reads LTASACILAGILVVVLPITLIFNKFSHFY. Over 418-477 the chain is Cytoplasmic; sequence RRQKQLESAMRSCDFGDGMKEVPSVNLRDYYAHKVKSLMASLTNMSRSSPSELSLDDSLH.

The protein belongs to the potassium channel family. S (TC 1.A.1.2) subfamily. Kv9.2/KCNS2 sub-subfamily. As to quaternary structure, heterotetramer with KCNB1 and KCNB2. Does not form homomultimers. As to expression, detected in brain, lung and in pulmonary arteries.

The protein localises to the cell membrane. Its function is as follows. Potassium channel regulatory subunit that modulate the delayed rectifier voltage-gated potassium channel activity of KCNB1 and KCNB2 by altering their kinetics, expression levels, and shifting the half-inactivation potential to more polarized values. While it does not form functional channels on its own, it can form functional heterotetrameric channels with KCNB1 and KCNB2. Each regulatory subunit has unique regulatory properties that can lead to extensive inhibition, significant changes in kinetics, and/or substantial shifts in the voltage dependencies of the inactivation process. This Rattus norvegicus (Rat) protein is Delayed-rectifier potassium channel regulatory subunit KCNS2.